The sequence spans 255 residues: Hydroxyacylglutathione hydrolase (255 aa).

H56, H58, D60, H61, H114, D133, and H171 together coordinate Zn(2+).

This sequence belongs to the metallo-beta-lactamase superfamily. Glyoxalase II family. In terms of assembly, monomer. It depends on Zn(2+) as a cofactor.

It catalyses the reaction an S-(2-hydroxyacyl)glutathione + H2O = a 2-hydroxy carboxylate + glutathione + H(+). Its pathway is secondary metabolite metabolism; methylglyoxal degradation; (R)-lactate from methylglyoxal: step 2/2. Functionally, thiolesterase that catalyzes the hydrolysis of S-D-lactoyl-glutathione to form glutathione and D-lactic acid. The sequence is that of Hydroxyacylglutathione hydrolase from Cereibacter sphaeroides (strain ATCC 17029 / ATH 2.4.9) (Rhodobacter sphaeroides).